We begin with the raw amino-acid sequence, 932 residues long: 2-oxoglutarate dehydrogenase E1 component (932 aa).

The protein belongs to the alpha-ketoglutarate dehydrogenase family. In terms of assembly, homodimer. Part of the 2-oxoglutarate dehydrogenase (OGDH) complex composed of E1 (2-oxoglutarate dehydrogenase), E2 (dihydrolipoamide succinyltransferase) and E3 (dihydrolipoamide dehydrogenase); the complex contains multiple copies of the three enzymatic components (E1, E2 and E3). Requires thiamine diphosphate as cofactor.

It catalyses the reaction N(6)-[(R)-lipoyl]-L-lysyl-[protein] + 2-oxoglutarate + H(+) = N(6)-[(R)-S(8)-succinyldihydrolipoyl]-L-lysyl-[protein] + CO2. E1 component of the 2-oxoglutarate dehydrogenase (OGDH) complex which catalyzes the decarboxylation of 2-oxoglutarate, the first step in the conversion of 2-oxoglutarate to succinyl-CoA and CO(2). The sequence is that of 2-oxoglutarate dehydrogenase E1 component from Staphylococcus aureus (strain MRSA252).